Here is a 117-residue protein sequence, read N- to C-terminus: Large ribosomal subunit protein bL20 (117 aa).

The protein belongs to the bacterial ribosomal protein bL20 family.

Binds directly to 23S ribosomal RNA and is necessary for the in vitro assembly process of the 50S ribosomal subunit. It is not involved in the protein synthesizing functions of that subunit. The chain is Large ribosomal subunit protein bL20 from Rickettsia akari (strain Hartford).